Here is a 387-residue protein sequence, read N- to C-terminus: Succinyl-diaminopimelate desuccinylase (387 aa).

Position 74 (H74) interacts with Zn(2+). Residue D76 is part of the active site. D107 contributes to the Zn(2+) binding site. E142 functions as the Proton acceptor in the catalytic mechanism. Zn(2+) contacts are provided by E143, E171, and H360.

It belongs to the peptidase M20A family. DapE subfamily. In terms of assembly, homodimer. The cofactor is Zn(2+). Co(2+) serves as cofactor.

The enzyme catalyses N-succinyl-(2S,6S)-2,6-diaminopimelate + H2O = (2S,6S)-2,6-diaminopimelate + succinate. It functions in the pathway amino-acid biosynthesis; L-lysine biosynthesis via DAP pathway; LL-2,6-diaminopimelate from (S)-tetrahydrodipicolinate (succinylase route): step 3/3. Functionally, catalyzes the hydrolysis of N-succinyl-L,L-diaminopimelic acid (SDAP), forming succinate and LL-2,6-diaminopimelate (DAP), an intermediate involved in the bacterial biosynthesis of lysine and meso-diaminopimelic acid, an essential component of bacterial cell walls. The chain is Succinyl-diaminopimelate desuccinylase from Rhodopseudomonas palustris (strain ATCC BAA-98 / CGA009).